Here is a 225-residue protein sequence, read N- to C-terminus: Large ribosomal subunit protein uL1 (225 aa).

The protein belongs to the universal ribosomal protein uL1 family. Part of the 50S ribosomal subunit.

In terms of biological role, binds directly to 23S rRNA. Probably involved in E site tRNA release. Protein L1 is also a translational repressor protein, it controls the translation of its operon by binding to its mRNA. The chain is Large ribosomal subunit protein uL1 from Thermofilum pendens (strain DSM 2475 / Hrk 5).